Reading from the N-terminus, the 152-residue chain is Maintenance of carboxysome distribution protein B (152 aa).

As to quaternary structure, self-associates, interacts with McdA probably via the C-terminus of both proteins. Homohexamerizes. Probably a trimer of dimers. Interacts with most of the shell components of the carboxysome (CcmK2, CcmK3, CcmK4, CcmL and CcmO, but not CcmP) via its C-terminus.

Its subcellular location is the carboxysome. In terms of biological role, mcdA and McdB together mediate carboxysome (Cb) spacing, size, ultrastructure and probably inheritance in the cell. Together they prevent Cb aggregation. McdA is an ATPase that forms dynamic gradients on the nucleoid in response to adapter protein McdB, which associates with carboxysomes. The interplay between McdA gradients on the nucleoid and McdB-bound carboxysomes result in the equal spacing of Cbs along the cell length. McdB may have an additional function in cell divison. Stimulates the ATPase activity of McdA, causing McdA to be released from DNA. Overexpression leads to loss of McdA oscillation and formation of large Cb aggregates which colocalize with McdB, as well as diffuse McdB staining in the cytoplasm. Undergoes liquid-liquid phase separation between pH 6.5-7.5 and at concentrations between 1 uM and 167 uM. Forms polar foci upon overexpression in E.coli. Its function is as follows. Incorrect positioning (aggregation) of carboxysomes results in reduced CO(2) fixation by encapsulated RuBisCO, which leads to slower growth, cell elongation, asymmetric cell division and an increase in RuBisCO levels. This is Maintenance of carboxysome distribution protein B from Synechococcus elongatus (strain ATCC 33912 / PCC 7942 / FACHB-805) (Anacystis nidulans R2).